A 323-amino-acid polypeptide reads, in one-letter code: Transaldolase (323 aa).

Lys133 (schiff-base intermediate with substrate) is an active-site residue.

Belongs to the transaldolase family. Type 1 subfamily. Monomer.

The catalysed reaction is D-sedoheptulose 7-phosphate + D-glyceraldehyde 3-phosphate = D-erythrose 4-phosphate + beta-D-fructose 6-phosphate. The protein operates within carbohydrate degradation; pentose phosphate pathway; D-glyceraldehyde 3-phosphate and beta-D-fructose 6-phosphate from D-ribose 5-phosphate and D-xylulose 5-phosphate (non-oxidative stage): step 2/3. Its function is as follows. Important for the balance of metabolites in the pentose-phosphate pathway. Involved in xylose fermentation to ethanol. In Gibberella intermedia (Bulb rot disease fungus), this protein is Transaldolase.